A 149-amino-acid polypeptide reads, in one-letter code: Transcriptional repressor NrdR (149 aa).

A zinc finger spans residues 3–34 (CPFCAAEETKVVDSRLAADGYQIRRRRECTSC). In terms of domain architecture, ATP-cone spans 49-139 (PYVIKNNGNR…VYLSFDDIEE (91 aa)).

The protein belongs to the NrdR family. It depends on Zn(2+) as a cofactor.

In terms of biological role, negatively regulates transcription of bacterial ribonucleotide reductase nrd genes and operons by binding to NrdR-boxes. The sequence is that of Transcriptional repressor NrdR from Actinobacillus pleuropneumoniae serotype 5b (strain L20).